The chain runs to 314 residues: MQGGDHGGMEMGVGSFTGGGGGGECSSSSATAAAAAAAAAAAAAAEAEERQLLKGEIAVHPLCEQLVAAHVGCLRVATPIDHLPLIDAQLAQSSGLLHSYAAHHRPFLSPHDKQELDSFLAQYMMLLCSFREQLQQHVRVHAVEAVMACREIEQSLQDLTGATLEEGTGATMSEDEDETAPMLEGPMDMGSDGHDLMGFGPLMPTDSERSLMERVRQELKIELKQGFKSRIEDVREEILRKRRAGKLPGDTTTILKQWWQQHSKWPYPTEDDKAKLVEETGLQLKQINNWFINQRKRNWHNNSQTSTLKSKRKR.

The region spanning 218–238 (ELKIELKQGFKSRIEDVREEI) is the ELK domain. Positions 239–302 (LRKRRAGKLP…NQRKRNWHNN (64 aa)) form a DNA-binding region, homeobox; TALE-type.

It belongs to the TALE/KNOX homeobox family. As to expression, isoform 1 is expressed in roots and flowers, and at lower levels in leaf blades and leaf sheaths. Isoform 2 is expressed in roots and flowers.

Its subcellular location is the nucleus. The polypeptide is Homeobox protein knotted-1-like 3 (HOS66) (Oryza sativa subsp. japonica (Rice)).